We begin with the raw amino-acid sequence, 125 residues long: uncharacterized protein (125 aa).

A helical membrane pass occupies residues 100 to 120 (YFKVAFALAVLTPLAIWIFYI).

The protein resides in the membrane. This is an uncharacterized protein from Saccharomyces cerevisiae (strain ATCC 204508 / S288c) (Baker's yeast).